A 212-amino-acid polypeptide reads, in one-letter code: ATP phosphoribosyltransferase (212 aa).

This sequence belongs to the ATP phosphoribosyltransferase family. Short subfamily. As to quaternary structure, heteromultimer composed of HisG and HisZ subunits.

The protein resides in the cytoplasm. It carries out the reaction 1-(5-phospho-beta-D-ribosyl)-ATP + diphosphate = 5-phospho-alpha-D-ribose 1-diphosphate + ATP. Its pathway is amino-acid biosynthesis; L-histidine biosynthesis; L-histidine from 5-phospho-alpha-D-ribose 1-diphosphate: step 1/9. Its function is as follows. Catalyzes the condensation of ATP and 5-phosphoribose 1-diphosphate to form N'-(5'-phosphoribosyl)-ATP (PR-ATP). Has a crucial role in the pathway because the rate of histidine biosynthesis seems to be controlled primarily by regulation of HisG enzymatic activity. This Prochlorococcus marinus (strain MIT 9515) protein is ATP phosphoribosyltransferase.